Here is a 593-residue protein sequence, read N- to C-terminus: Arginine--tRNA ligase (593 aa).

A 'HIGH' region motif is present at residues 138-148 (ANPTGPLHVGH).

This sequence belongs to the class-I aminoacyl-tRNA synthetase family. In terms of assembly, monomer.

It is found in the cytoplasm. It catalyses the reaction tRNA(Arg) + L-arginine + ATP = L-arginyl-tRNA(Arg) + AMP + diphosphate. The polypeptide is Arginine--tRNA ligase (Burkholderia cenocepacia (strain ATCC BAA-245 / DSM 16553 / LMG 16656 / NCTC 13227 / J2315 / CF5610) (Burkholderia cepacia (strain J2315))).